An 88-amino-acid chain; its full sequence is Small ribosomal subunit protein bS16 (88 aa).

The protein belongs to the bacterial ribosomal protein bS16 family.

This chain is Small ribosomal subunit protein bS16, found in Baumannia cicadellinicola subsp. Homalodisca coagulata.